We begin with the raw amino-acid sequence, 364 residues long: Dihydroorotate dehydrogenase (quinone) (364 aa).

Residues 61–65 and threonine 85 each bind FMN; that span reads AGYDK. Lysine 65 provides a ligand contact to substrate. 110–114 serves as a coordination point for substrate; it reads NRLGF. FMN-binding residues include asparagine 139 and asparagine 170. Asparagine 170 provides a ligand contact to substrate. Serine 173 functions as the Nucleophile in the catalytic mechanism. A substrate-binding site is contributed by asparagine 175. FMN-binding residues include lysine 215 and serine 243. 244–245 contacts substrate; sequence NT. Residues glycine 266, glycine 295, and 316–317 contribute to the FMN site; that span reads YT.

Belongs to the dihydroorotate dehydrogenase family. Type 2 subfamily. Monomer. It depends on FMN as a cofactor.

It is found in the cell membrane. The catalysed reaction is (S)-dihydroorotate + a quinone = orotate + a quinol. It participates in pyrimidine metabolism; UMP biosynthesis via de novo pathway; orotate from (S)-dihydroorotate (quinone route): step 1/1. Catalyzes the conversion of dihydroorotate to orotate with quinone as electron acceptor. The protein is Dihydroorotate dehydrogenase (quinone) of Brucella abortus (strain S19).